The sequence spans 180 residues: Oligoribonuclease (180 aa).

Positions 7 to 170 constitute an Exonuclease domain; that stretch reads LIWIDLEMTG…DDIRESIAEL (164 aa). Tyrosine 128 is an active-site residue.

It belongs to the oligoribonuclease family.

Its subcellular location is the cytoplasm. Its function is as follows. 3'-to-5' exoribonuclease specific for small oligoribonucleotides. In Pseudomonas paraeruginosa (strain DSM 24068 / PA7) (Pseudomonas aeruginosa (strain PA7)), this protein is Oligoribonuclease.